Here is a 73-residue protein sequence, read N- to C-terminus: Conotoxin MaI51 (73 aa).

The N-terminal stretch at 1–19 (MQKLTILLLVAAVLLSTQA) is a signal peptide. Positions 20-41 (LNQEKRPKEMINVLSKGKTNAE) are excised as a propeptide. Glutamine 46 carries the post-translational modification Pyrrolidone carboxylic acid. Cystine bridges form between cysteine 47/cysteine 61, cysteine 54/cysteine 65, and cysteine 60/cysteine 69. An Isoleucine amide modification is found at isoleucine 72.

It belongs to the conotoxin O2 superfamily. In terms of tissue distribution, expressed by the venom duct.

The protein localises to the secreted. The polypeptide is Conotoxin MaI51 (Conus marmoreus (Marble cone)).